The chain runs to 489 residues: uncharacterized protein (489 aa).

In terms of domain architecture, 2Fe-2S ferredoxin-type spans isoleucine 2–phenylalanine 84. Positions 48, 53, 56, and 68 each coordinate [2Fe-2S] cluster. 2 consecutive 4Fe-4S ferredoxin-type domains span residues lysine 123–proline 155 and threonine 177–arginine 205. [4Fe-4S] cluster-binding residues include cysteine 134, cysteine 137, cysteine 140, cysteine 144, cysteine 186, cysteine 189, cysteine 192, and cysteine 196.

It belongs to the succinate dehydrogenase/fumarate reductase iron-sulfur protein family.

This is an uncharacterized protein from Methanocaldococcus jannaschii (strain ATCC 43067 / DSM 2661 / JAL-1 / JCM 10045 / NBRC 100440) (Methanococcus jannaschii).